The following is a 187-amino-acid chain: Fibroblast growth factor 4A (187 aa).

Positions 1-22 (MTVPSALVPILLLGTAAVMVQC) are cleaved as a signal peptide.

The protein belongs to the heparin-binding growth factors family.

The protein localises to the secreted. Functionally, plays an important role in the regulation of embryonic development, cell proliferation, and cell differentiation. Good candidate for an inducing factor with possible roles both in mesoderm induction at the blastula stage and in the formation of the anteroposterior axis at the gastrula stage. The polypeptide is Fibroblast growth factor 4A (fgf4-a) (Xenopus laevis (African clawed frog)).